Reading from the N-terminus, the 583-residue chain is ATP-dependent lipid A-core flippase (583 aa).

A run of 5 helical transmembrane segments spans residues L27–L47, L69–L89, A142–Y162, W165–V185, and A249–L269. Positions A28–R310 constitute an ABC transmembrane type-1 domain. The ABC transporter domain occupies V342–I578. An ATP-binding site is contributed by G376–S383.

This sequence belongs to the ABC transporter superfamily. Lipid exporter (TC 3.A.1.106) family. Homodimer.

It localises to the cell inner membrane. It catalyses the reaction ATP + H2O + lipid A-core oligosaccharideSide 1 = ADP + phosphate + lipid A-core oligosaccharideSide 2.. In terms of biological role, involved in lipopolysaccharide (LPS) biosynthesis. Translocates lipid A-core from the inner to the outer leaflet of the inner membrane. Transmembrane domains (TMD) form a pore in the inner membrane and the ATP-binding domain (NBD) is responsible for energy generation. This chain is ATP-dependent lipid A-core flippase, found in Vibrio vulnificus (strain CMCP6).